The sequence spans 429 residues: Adenylosuccinate synthetase (429 aa).

Residues 12-18 (GDEGKGK) and 40-42 (GHT) contribute to the GTP site. Residue Asp-13 is the Proton acceptor of the active site. Mg(2+) contacts are provided by Asp-13 and Gly-40. IMP-binding positions include 13 to 16 (DEGK), 38 to 41 (NAGH), Thr-128, Arg-142, Gln-223, Thr-238, and Arg-302. The Proton donor role is filled by His-41. 298 to 304 (TTTGRPR) is a substrate binding site. Residues Arg-304, 330–332 (SID), and 412–414 (SVG) contribute to the GTP site.

Belongs to the adenylosuccinate synthetase family. Homodimer. The cofactor is Mg(2+).

The protein resides in the cytoplasm. It carries out the reaction IMP + L-aspartate + GTP = N(6)-(1,2-dicarboxyethyl)-AMP + GDP + phosphate + 2 H(+). It participates in purine metabolism; AMP biosynthesis via de novo pathway; AMP from IMP: step 1/2. Plays an important role in the de novo pathway of purine nucleotide biosynthesis. Catalyzes the first committed step in the biosynthesis of AMP from IMP. This Bacillus cytotoxicus (strain DSM 22905 / CIP 110041 / 391-98 / NVH 391-98) protein is Adenylosuccinate synthetase.